The chain runs to 428 residues: Enolase (428 aa).

A (2R)-2-phosphoglycerate-binding site is contributed by Q163. E205 (proton donor) is an active-site residue. Mg(2+)-binding residues include D242, E285, and D311. Residues K336, R365, S366, and K387 each coordinate (2R)-2-phosphoglycerate. K336 (proton acceptor) is an active-site residue.

It belongs to the enolase family. Mg(2+) serves as cofactor.

It is found in the cytoplasm. Its subcellular location is the secreted. It localises to the cell surface. The enzyme catalyses (2R)-2-phosphoglycerate = phosphoenolpyruvate + H2O. It functions in the pathway carbohydrate degradation; glycolysis; pyruvate from D-glyceraldehyde 3-phosphate: step 4/5. Catalyzes the reversible conversion of 2-phosphoglycerate (2-PG) into phosphoenolpyruvate (PEP). It is essential for the degradation of carbohydrates via glycolysis. The polypeptide is Enolase (Desulfatibacillum aliphaticivorans).